A 763-amino-acid chain; its full sequence is Xaa-Pro dipeptidyl-peptidase (763 aa).

Residues S348, D468, and H498 each act as charge relay system in the active site.

This sequence belongs to the peptidase S15 family. As to quaternary structure, homodimer.

It is found in the cytoplasm. The catalysed reaction is Hydrolyzes Xaa-Pro-|- bonds to release unblocked, N-terminal dipeptides from substrates including Ala-Pro-|-p-nitroanilide and (sequentially) Tyr-Pro-|-Phe-Pro-|-Gly-Pro-|-Ile.. Functionally, removes N-terminal dipeptides sequentially from polypeptides having unsubstituted N-termini provided that the penultimate residue is proline. The polypeptide is Xaa-Pro dipeptidyl-peptidase (pepX) (Lactococcus lactis subsp. lactis (strain IL1403) (Streptococcus lactis)).